The primary structure comprises 1205 residues: Partitioning defective 3 homolog B (1205 aa).

Disordered stretches follow at residues 83–104 (EPLH…PDAF) and 137–165 (VRRS…SLKL). At Ser-100 the chain carries Phosphoserine. Residues 201-289 (TRTVEISGEG…SPSVLLHVLP (89 aa)) form the PDZ 1 domain. Positions 318–374 (VPPPVHGKSGLKTANLTGTDSPETDASASLQQNKSPRVPRLGGKPSSPSLSPLMGFG) are disordered. A compositionally biased stretch (polar residues) spans 329 to 352 (KTANLTGTDSPETDASASLQQNKS). 3 positions are modified to phosphoserine: Ser-346, Ser-352, and Ser-368. The segment covering 356–374 (PRLGGKPSSPSLSPLMGFG) has biased composition (low complexity). PDZ domains follow at residues 383 to 468 (KIDL…VIAR) and 498 to 585 (EIPL…GMIQ). Ser-635, Ser-710, Ser-728, Ser-730, Ser-746, Ser-749, and Ser-801 each carry phosphoserine. Positions 707–743 (ASKSMDLVPDESKVHSLAGQKSESPSKDFGPTLGLKK) are disordered. Disordered stretches follow at residues 784-921 (AIDK…KHQE) and 1111-1205 (PYYP…TAAV). Over residues 806–822 (HSGQGALNCESAPQGNS) the composition is skewed to polar residues. Composition is skewed to basic and acidic residues over residues 838-865 (KEKE…DPER) and 881-921 (KKED…KHQE). Ser-1184 carries the post-translational modification Phosphoserine.

It belongs to the PAR3 family. Interacts with PARD6B. Interacts with INSC/inscuteable. As to expression, highly expressed in kidney, lung and skeletal muscle. Expressed at intermediate levels in brain, heart, placenta, liver and pancreas. Isoform 1 is predominant, while isoform 2 and isoform 3 are expressed at lower levels.

It localises to the endomembrane system. It is found in the cell junction. The protein resides in the tight junction. Its function is as follows. Putative adapter protein involved in asymmetrical cell division and cell polarization processes. May play a role in the formation of epithelial tight junctions. This chain is Partitioning defective 3 homolog B (PARD3B), found in Homo sapiens (Human).